The primary structure comprises 610 residues: UvrABC system protein C (610 aa).

The 79-residue stretch at 16 to 94 (SQPGVYRMYD…IKLYQPRYNV (79 aa)) folds into the GIY-YIG domain. The UVR domain maps to 204–239 (DQVLTQLISRMETASQNLEFEEAARIRDQIQAVRRV).

This sequence belongs to the UvrC family. Interacts with UvrB in an incision complex.

It localises to the cytoplasm. Functionally, the UvrABC repair system catalyzes the recognition and processing of DNA lesions. UvrC both incises the 5' and 3' sides of the lesion. The N-terminal half is responsible for the 3' incision and the C-terminal half is responsible for the 5' incision. The polypeptide is UvrABC system protein C (Escherichia coli (strain SMS-3-5 / SECEC)).